A 440-amino-acid chain; its full sequence is Acetylornithine deacetylase (440 aa).

H101 serves as a coordination point for Zn(2+). Residue D103 is part of the active site. Residue D133 participates in Zn(2+) binding. E167 acts as the Proton acceptor in catalysis. Residues E168 and H412 each contribute to the Zn(2+) site.

Belongs to the peptidase M20A family. ArgE subfamily. Homodimer. Requires Zn(2+) as cofactor. The cofactor is Co(2+).

The catalysed reaction is N(2)-acetyl-L-ornithine + H2O = L-ornithine + acetate. Its pathway is amino-acid biosynthesis; L-arginine biosynthesis; L-ornithine from N(2)-acetyl-L-ornithine (linear): step 1/1. The protein is Acetylornithine deacetylase of Arabidopsis thaliana (Mouse-ear cress).